A 531-amino-acid polypeptide reads, in one-letter code: MERLAGKIILLSGASRAFVGFLAGLLAMFAQPPFGIFAAAFISFPMLVWLIDGVATHPDEGVVRRLLPAASIGWSFGFGYFLGGLWWLGNAFLVEADLFAWAMPLAVVGLPAVLALFYALAVLVARCLWSDGVGRIAALAVGFGVAEWLRSFLFTGFPWNAIGYAAMPMPLMMQSASVLNVATINMLAVFVFAAPALIGTGKGARVGLAVAAALFAAHIGYGYYRLSLPPPQPLTPERTVRLVQPVIDQAKKMDDRERAVIFEEHLALTAAPPQAGGKRPDIVVWPETSIPFILTDNPDALARIADVLQDGQILVAGAVRAEDAGTGLPPRYYNSIYVIDDRGQIVGASDKVHLVPFGEYLPFEDVLNSWGLSSIAANMPGGFSAASNRSVLTLPGGRTFYPLICYEAIFADEVDGSARLSDALLNVTNDAWFGDTPGPRQHFHQAQLRTIETGLPMIRAANTGISAIVDARGVLVVGLGYNYKGVTDAILPGKMPTMTDSMLRGRIFWFTGVFLLLVAAISRRGLNFRTN.

Transmembrane regions (helical) follow at residues 8–28, 34–54, 74–94, 105–125, 128–148, 178–198, and 206–226; these read IILL…LLAM, FGIF…IDGV, WSFG…AFLV, LAVV…VLVA, LWSD…VAEW, VLNV…PALI, and VGLA…YYRL. One can recognise a CN hydrolase domain in the interval 243-493; that stretch reads VQPVIDQAKK…KGVTDAILPG (251 aa). Residue Glu287 is the Proton acceptor of the active site. Lys351 is a catalytic residue. The Nucleophile role is filled by Cys405. Residues 501-521 traverse the membrane as a helical segment; the sequence is SMLRGRIFWFTGVFLLLVAAI.

The protein belongs to the CN hydrolase family. Apolipoprotein N-acyltransferase subfamily.

The protein resides in the cell inner membrane. The catalysed reaction is N-terminal S-1,2-diacyl-sn-glyceryl-L-cysteinyl-[lipoprotein] + a glycerophospholipid = N-acyl-S-1,2-diacyl-sn-glyceryl-L-cysteinyl-[lipoprotein] + a 2-acyl-sn-glycero-3-phospholipid + H(+). The protein operates within protein modification; lipoprotein biosynthesis (N-acyl transfer). Its function is as follows. Catalyzes the phospholipid dependent N-acylation of the N-terminal cysteine of apolipoprotein, the last step in lipoprotein maturation. This Sinorhizobium fredii (strain NBRC 101917 / NGR234) protein is Apolipoprotein N-acyltransferase.